The primary structure comprises 274 residues: Nitrogenase iron protein (274 aa).

Position 8-15 (8-15) interacts with ATP; it reads GKGGIGKS. Residue cysteine 94 participates in [4Fe-4S] cluster binding. An ADP-ribosylarginine; by dinitrogenase reductase ADP-ribosyltransferase modification is found at arginine 97. [4Fe-4S] cluster is bound at residue cysteine 131.

This sequence belongs to the NifH/BchL/ChlL family. As to quaternary structure, homodimer. [4Fe-4S] cluster is required as a cofactor. Post-translationally, the reversible ADP-ribosylation of Arg-97 inactivates the nitrogenase reductase and regulates nitrogenase activity.

It catalyses the reaction N2 + 8 reduced [2Fe-2S]-[ferredoxin] + 16 ATP + 16 H2O = H2 + 8 oxidized [2Fe-2S]-[ferredoxin] + 2 NH4(+) + 16 ADP + 16 phosphate + 6 H(+). The key enzymatic reactions in nitrogen fixation are catalyzed by the nitrogenase complex, which has 2 components: the iron protein and the molybdenum-iron protein. In Solidesulfovibrio magneticus (strain ATCC 700980 / DSM 13731 / RS-1) (Desulfovibrio magneticus), this protein is Nitrogenase iron protein.